The following is a 714-amino-acid chain: Phosphoribosylformylglycinamidine synthase subunit PurL (714 aa).

His-34 is an active-site residue. Tyr-37 provides a ligand contact to ATP. Glu-78 contributes to the Mg(2+) binding site. Substrate contacts are provided by residues 79 to 82 and Arg-101; that span reads SHNH. The active-site Proton acceptor is His-80. Residue Asp-102 participates in Mg(2+) binding. Residue Gln-226 participates in substrate binding. Asp-254 is a Mg(2+) binding site. 298–300 serves as a coordination point for substrate; it reads ESQ. 2 residues coordinate ATP: Asp-474 and Gly-511. Position 512 (Asn-512) interacts with Mg(2+). Ser-514 is a substrate binding site.

Belongs to the FGAMS family. As to quaternary structure, monomer. Part of the FGAM synthase complex composed of 1 PurL, 1 PurQ and 2 PurS subunits.

The protein resides in the cytoplasm. It carries out the reaction N(2)-formyl-N(1)-(5-phospho-beta-D-ribosyl)glycinamide + L-glutamine + ATP + H2O = 2-formamido-N(1)-(5-O-phospho-beta-D-ribosyl)acetamidine + L-glutamate + ADP + phosphate + H(+). It functions in the pathway purine metabolism; IMP biosynthesis via de novo pathway; 5-amino-1-(5-phospho-D-ribosyl)imidazole from N(2)-formyl-N(1)-(5-phospho-D-ribosyl)glycinamide: step 1/2. In terms of biological role, part of the phosphoribosylformylglycinamidine synthase complex involved in the purines biosynthetic pathway. Catalyzes the ATP-dependent conversion of formylglycinamide ribonucleotide (FGAR) and glutamine to yield formylglycinamidine ribonucleotide (FGAM) and glutamate. The FGAM synthase complex is composed of three subunits. PurQ produces an ammonia molecule by converting glutamine to glutamate. PurL transfers the ammonia molecule to FGAR to form FGAM in an ATP-dependent manner. PurS interacts with PurQ and PurL and is thought to assist in the transfer of the ammonia molecule from PurQ to PurL. In Methanothermobacter thermautotrophicus (strain ATCC 29096 / DSM 1053 / JCM 10044 / NBRC 100330 / Delta H) (Methanobacterium thermoautotrophicum), this protein is Phosphoribosylformylglycinamidine synthase subunit PurL.